A 219-amino-acid polypeptide reads, in one-letter code: Probable GTP-binding protein EngB (219 aa).

One can recognise an EngB-type G domain in the interval 42-219 (SVPEIAFAGR…RTAVLEAVEL (178 aa)). Residues 50–57 (GRSNVGKS), 77–81 (GRTQE), 97–100 (DMPG), 164–167 (TKAD), and 198–200 (TSS) contribute to the GTP site. Positions 57 and 79 each coordinate Mg(2+).

This sequence belongs to the TRAFAC class TrmE-Era-EngA-EngB-Septin-like GTPase superfamily. EngB GTPase family. Mg(2+) is required as a cofactor.

Functionally, necessary for normal cell division and for the maintenance of normal septation. The sequence is that of Probable GTP-binding protein EngB from Sphingopyxis alaskensis (strain DSM 13593 / LMG 18877 / RB2256) (Sphingomonas alaskensis).